The following is a 317-amino-acid chain: tRNA dimethylallyltransferase (317 aa).

Gly14–Thr21 is a binding site for ATP. Thr16–Thr21 contacts substrate. The interaction with substrate tRNA stretch occupies residues Asp39 to Gln42.

It belongs to the IPP transferase family. Monomer. Mg(2+) serves as cofactor.

It carries out the reaction adenosine(37) in tRNA + dimethylallyl diphosphate = N(6)-dimethylallyladenosine(37) in tRNA + diphosphate. Its function is as follows. Catalyzes the transfer of a dimethylallyl group onto the adenine at position 37 in tRNAs that read codons beginning with uridine, leading to the formation of N6-(dimethylallyl)adenosine (i(6)A). This Bacillus thuringiensis subsp. konkukian (strain 97-27) protein is tRNA dimethylallyltransferase.